A 275-amino-acid chain; its full sequence is Formamidopyrimidine-DNA glycosylase (275 aa).

Pro-2 serves as the catalytic Schiff-base intermediate with DNA. The active-site Proton donor is Glu-3. Catalysis depends on Lys-58, which acts as the Proton donor; for beta-elimination activity. DNA is bound by residues His-91 and Arg-110. The FPG-type zinc finger occupies 238–272 (QVYGQTGKSCPRCGQAIVKLKVGGRGTHICPKCQK). Arg-262 serves as the catalytic Proton donor; for delta-elimination activity.

It belongs to the FPG family. Monomer. Zn(2+) is required as a cofactor.

The catalysed reaction is Hydrolysis of DNA containing ring-opened 7-methylguanine residues, releasing 2,6-diamino-4-hydroxy-5-(N-methyl)formamidopyrimidine.. It catalyses the reaction 2'-deoxyribonucleotide-(2'-deoxyribose 5'-phosphate)-2'-deoxyribonucleotide-DNA = a 3'-end 2'-deoxyribonucleotide-(2,3-dehydro-2,3-deoxyribose 5'-phosphate)-DNA + a 5'-end 5'-phospho-2'-deoxyribonucleoside-DNA + H(+). Involved in base excision repair of DNA damaged by oxidation or by mutagenic agents. Acts as a DNA glycosylase that recognizes and removes damaged bases. Has a preference for oxidized purines, such as 7,8-dihydro-8-oxoguanine (8-oxoG). Has AP (apurinic/apyrimidinic) lyase activity and introduces nicks in the DNA strand. Cleaves the DNA backbone by beta-delta elimination to generate a single-strand break at the site of the removed base with both 3'- and 5'-phosphates. In Streptococcus pyogenes serotype M3 (strain ATCC BAA-595 / MGAS315), this protein is Formamidopyrimidine-DNA glycosylase.